Here is a 330-residue protein sequence, read N- to C-terminus: Glycine betaine/proline betaine-binding periplasmic protein (330 aa).

The signal sequence occupies residues 1-21; that stretch reads MRHSVLFATAFATLISTQTFA. Residues Trp-86, His-90, and 161 to 163 each bind substrate; that span reads WGC. A disulfide bridge connects residues Cys-157 and Cys-163.

In terms of assembly, the complex is composed of two ATP-binding proteins (ProV), two transmembrane proteins (ProW) and a solute-binding protein (ProX).

The protein localises to the periplasm. In terms of biological role, part of the ProU ABC transporter complex involved in glycine betaine and proline betaine uptake. Binds glycine betaine and proline betaine with high affinity. In Escherichia coli (strain K12), this protein is Glycine betaine/proline betaine-binding periplasmic protein.